The sequence spans 852 residues: MGESHAPSKPKLDGELCLRPSSSVFLGDQQLYFTQEYLRTNSLNLKYVVYFTACQFSGPIAVAYSPRPASWYIWIRTISGRILKRDMAFNEPVFMEWTRAHCLLVLNKAGRAHIFSSLGEKISEVIFDSQMSDVHECRTFATSRGDSGIAVMDVDGQVSVVNSVSEPVIWSMKPPYSEMPTAWTAFQPHSQLTHILLIFEAVFLMGCQGESLREQSHAASWVDSNTKYVKCVVDDARSRIAMMTESGKIQIVSIDLSTCFCTVEITDHDIAKCINFGWVGNSAVFVQMSPSLIVFVNVSARRKPGDEVQIYEKMTANAKISIEPDGIRLFESTQVEFVEAASREKIAVLNRNPNEDGAHLYKAAQEMSQGTGHNSFAASTVIQDLYKAIDDCISTACDTWQPEEQKLLLKAARFGMAYTNTTPDTTKLMRAIKEIRVLNELRMVRTGIPLTHRQFRAIGETCVINRLIDMGSYSVAIKVAQWLGGETSENVDRVLLEWVRRSISKVSKSNMKMDQPALEALDEKISAKLLQFPHVSIADAARRAIEAKLPELARLFIRRETDDANHVAVLLQLNDVSAALQKASASQRPQLIHQVVRHLMNSESRSSYELAISRIPLAQCLYQDLVRQEGETRGASSRQMLALLEQASDFERQTLFHFDVAETERNPDERLNALRRAKDAAKSMGDKAIEEILNDVSAFAPLQIQRGQADMSVRDTVIEMAHDTAKVAQLKQQARLTDKQVLLWTIEGLAKKGKMEQLFDLAQKRSPIGYAPFVKACVRYKRLDEIKKYFAKVNGYPDLVAAHLAMKNYVEAAKLAYDRRDRDVLHAVHMKSHEDPTQCPRVGQFLRSLDQN.

This sequence belongs to the VPS16 family. As to quaternary structure, probable core component of at least two putative endosomal tethering complexes, the homotypic fusion and vacuole protein sorting (HOPS) complex and the class C core vacuole/endosome tethering (CORVET) complex. Their common core is composed of the class C Vps proteins vps-11, vps-16 and vps-18, which in HOPS further associates with vps-33.1, vps-39 and vps-41 and in CORVET with vps-8 and vps-33.2.

It is found in the late endosome membrane. The protein resides in the lysosome membrane. In terms of biological role, plays a role in vesicle-mediated protein trafficking to lysosomal compartments including the endocytic membrane transport pathways. Believed to act as a core component of the putative HOPS and CORVET endosomal tethering complexes which are proposed to be involved in the rab-5-to-rab-7 endosome conversion probably implicating sand-1, and via binding SNAREs and SNARE complexes to mediate tethering and docking events during SNARE-mediated membrane fusion. The HOPS complex is proposed to be recruited to rab-7 on the late endosomal membrane and to regulate late endocytic, phagocytic and autophagic traffic towards lysosomes. Within the HOPS complex, contributes to the normal development of gut granules in the adult intestine. The CORVET complex is proposed to function as a rab-5 effector to mediate early endosome fusion probably in specific endosome subpopulations. Required for recruitment of vps-33.1 to the HOPS complex. Required for fusion of endosomes and autophagosomes with lysosomes; the function is dependent on its association with vps-33.1 but not vps-33.2. The polypeptide is Vacuolar protein sorting-associated protein 16 homolog (Caenorhabditis elegans).